Reading from the N-terminus, the 246-residue chain is Probable transcriptional regulatory protein WD_0484 (246 aa).

The tract at residues 1–22 (MAGHSQFSNIKHRKGAQDAKRS) is disordered.

The protein belongs to the TACO1 family.

It localises to the cytoplasm. The sequence is that of Probable transcriptional regulatory protein WD_0484 from Wolbachia pipientis wMel.